The sequence spans 447 residues: Kynurenine 3-monooxygenase (447 aa).

This sequence belongs to the aromatic-ring hydroxylase family. KMO subfamily. The cofactor is FAD.

It catalyses the reaction L-kynurenine + NADPH + O2 + H(+) = 3-hydroxy-L-kynurenine + NADP(+) + H2O. It functions in the pathway cofactor biosynthesis; NAD(+) biosynthesis; quinolinate from L-kynurenine: step 1/3. Functionally, catalyzes the hydroxylation of L-kynurenine (L-Kyn) to form 3-hydroxy-L-kynurenine (L-3OHKyn). Required for synthesis of quinolinic acid. In Flavobacterium psychrophilum (strain ATCC 49511 / DSM 21280 / CIP 103535 / JIP02/86), this protein is Kynurenine 3-monooxygenase.